The sequence spans 241 residues: Carboxy-S-adenosyl-L-methionine synthase (241 aa).

S-adenosyl-L-methionine contacts are provided by residues tyrosine 38, 63–65 (GCS), 88–89 (DN), 116–117 (DI), asparagine 131, and arginine 198.

The protein belongs to the class I-like SAM-binding methyltransferase superfamily. Cx-SAM synthase family. Homodimer.

It catalyses the reaction prephenate + S-adenosyl-L-methionine = carboxy-S-adenosyl-L-methionine + 3-phenylpyruvate + H2O. Catalyzes the conversion of S-adenosyl-L-methionine (SAM) to carboxy-S-adenosyl-L-methionine (Cx-SAM). This Actinobacillus pleuropneumoniae serotype 5b (strain L20) protein is Carboxy-S-adenosyl-L-methionine synthase.